The following is a 233-amino-acid chain: C-type lectin domain family 2 member D6 (233 aa).

The tract at residues 1 to 45 is disordered; sequence MPSSAHLQDSPPLLSRTLTQNEGQTSLRQSSSCGPSATSASESLS. Residues 1–73 lie on the Cytoplasmic side of the membrane; sequence MPSSAHLQDS…GIILPESPAK (73 aa). A compositionally biased stretch (polar residues) spans 16 to 29; that stretch reads RTLTQNEGQTSLRQ. Low complexity predominate over residues 30–43; it reads SSSCGPSATSASES. Residues 74-94 traverse the membrane as a helical; Signal-anchor for type II membrane protein segment; the sequence is LLCCCAVIVVLSVAVVALSVA. The Extracellular portion of the chain corresponds to 95 to 233; sequence LSVKKTPQIS…KLNSYTSQCQ (139 aa). Residues 119–230 enclose the C-type lectin domain; that stretch reads VGNKCYYFNE…ICSKLNSYTS (112 aa). A glycan (N-linked (GlcNAc...) asparagine) is linked at Asn132.

The protein resides in the cell membrane. In terms of biological role, lectin-type cell surface receptor. In Rattus norvegicus (Rat), this protein is C-type lectin domain family 2 member D6 (Clec2d6).